Consider the following 488-residue polypeptide: Bifunctional NAD(P)H-hydrate repair enzyme Nnr (488 aa).

The interval 1–214 is NAD(P)H-hydrate epimerase; that stretch reads MTVLYQNRQI…LSESFFRAVF (214 aa). The YjeF N-terminal domain occupies 10–211; that stretch reads IRELERLAVE…RLGLSESFFR (202 aa). The interval 57 to 61 is NADPHX 1; for epimerase activity; sequence NNGGD. Residues Asn-58 and Asp-121 each coordinate K(+). Residues 125 to 131 are NADPHX 1; for epimerase activity; it reads GSGLSGE. (6S)-NADPHX is bound by residues Tyr-136 and Asp-154. Position 157 (Ser-157) interacts with K(+). Residues 221–488 enclose the YjeF C-terminal domain; the sequence is EWKGVFPLLP…FPHLRVLVNP (268 aa). Positions 221–488 are ADP-dependent (S)-NAD(P)H-hydrate dehydratase; that stretch reads EWKGVFPLLP…FPHLRVLVNP (268 aa). Residue Gly-317 participates in (6S)-NADPHX binding. Residues 363–369 are NADPHX 2; for dehydratase activity; that stretch reads HPGEASR. Residues 400 to 404 and 420 to 429 each bind ADP; these read KGVGT and NPGMATGGMG. Residue Asp-430 coordinates (6S)-NADPHX.

It in the N-terminal section; belongs to the NnrE/AIBP family. In the C-terminal section; belongs to the NnrD/CARKD family. It depends on K(+) as a cofactor.

It carries out the reaction (6S)-NADHX + ADP = AMP + phosphate + NADH + H(+). The enzyme catalyses (6S)-NADPHX + ADP = AMP + phosphate + NADPH + H(+). The catalysed reaction is (6R)-NADHX = (6S)-NADHX. It catalyses the reaction (6R)-NADPHX = (6S)-NADPHX. Functionally, bifunctional enzyme that catalyzes the epimerization of the S- and R-forms of NAD(P)HX and the dehydration of the S-form of NAD(P)HX at the expense of ADP, which is converted to AMP. This allows the repair of both epimers of NAD(P)HX, a damaged form of NAD(P)H that is a result of enzymatic or heat-dependent hydration. This is Bifunctional NAD(P)H-hydrate repair enzyme Nnr (nnr) from Coxiella burnetii (strain RSA 493 / Nine Mile phase I).